Reading from the N-terminus, the 356-residue chain is Glutamine synthetase (356 aa).

The GS beta-grasp domain maps to Ile19–Gly99. In terms of domain architecture, GS catalytic spans Lys106–Pro356.

Belongs to the glutamine synthetase family. Homooctamer.

It localises to the cytoplasm. It carries out the reaction L-glutamate + NH4(+) + ATP = L-glutamine + ADP + phosphate + H(+). The sequence is that of Glutamine synthetase from Hordeum vulgare (Barley).